Here is a 466-residue protein sequence, read N- to C-terminus: Myocardial zonula adherens protein (466 aa).

Over residues methionine 1–leucine 10 the composition is skewed to polar residues. A signal peptide spans methionine 1–glycine 20. The segment at methionine 1–serine 23 is disordered. Coiled-coil stretches lie at residues glutamine 96–glutamine 142 and leucine 174–lysine 418. The Required for DYNLL1-binding signature appears at arginine 424 to glutamate 425.

The protein belongs to the MYZAP family. Interacts with DSP, MPRIP and TJP1/ZO1. Interaction with MPRIP inhibits the activation of transcription factor SRF. Interacts with GRIN1. Interacts with DYNLL1. Detected in heart, liver, skeletal muscle, placenta, small intestine, lung, prostate and testis. Expressed in arrector pili muscle (at protein level).

Its subcellular location is the cytoplasm. The protein localises to the cytoskeleton. It is found in the cell membrane. The protein resides in the myofibril. It localises to the sarcomere. Its subcellular location is the i band. The protein localises to the z line. It is found in the cell junction. Its function is as follows. Plays a role in cellular signaling via Rho-related GTP-binding proteins and subsequent activation of transcription factor SRF. Targets TJP1 to cell junctions. In cortical neurons, may play a role in glutaminergic signal transduction through interaction with the NMDA receptor subunit GRIN1. The sequence is that of Myocardial zonula adherens protein (MYZAP) from Homo sapiens (Human).